Consider the following 153-residue polypeptide: Endoribonuclease YbeY (153 aa).

Zn(2+) is bound by residues histidine 114, histidine 118, and histidine 124.

Belongs to the endoribonuclease YbeY family. Zn(2+) is required as a cofactor.

It localises to the cytoplasm. Single strand-specific metallo-endoribonuclease involved in late-stage 70S ribosome quality control and in maturation of the 3' terminus of the 16S rRNA. The protein is Endoribonuclease YbeY of Shewanella baltica (strain OS185).